A 757-amino-acid chain; its full sequence is Protein lsd90 (757 aa).

Composition is skewed to polar residues over residues 1 to 11 (MVGTINESMQN), 19 to 36 (TAQS…SSSK), 51 to 69 (TAGN…SKNL), and 94 to 118 (DTSN…STYE). Disordered stretches follow at residues 1-131 (MVGT…SRSS), 224-244 (ERAR…EKQA), 589-633 (AQAE…KSKS), and 657-757 (AYVG…MSNK). Residues 166-604 (DEKTLQDLLE…KVESEYNSVK (439 aa)) adopt a coiled-coil conformation. Over residues 589-598 (AQAEQSKVES) the composition is skewed to basic and acidic residues. Residues 619-632 (VTTNEPTDVSTKSK) are compositionally biased toward polar residues. Residues 674 to 693 (STPSTLPTSASTNAAATTTT) show a composition bias toward low complexity. ATP is bound at residue 718–725 (GTTGLGKS).

In terms of biological role, may be involved in the metabolism of very long-chain fatty acid-containing phospholipids (VLCFA-PL). The chain is Protein lsd90 (lsd90) from Schizosaccharomyces pombe (strain 972 / ATCC 24843) (Fission yeast).